Consider the following 327-residue polypeptide: GMP reductase (327 aa).

Cys-176 acts as the Thioimidate intermediate in catalysis. 205-228 serves as a coordination point for NADP(+); it reads IIADGGIRTHGDIAKSIRFGASMV.

Belongs to the IMPDH/GMPR family. GuaC type 2 subfamily.

The enzyme catalyses IMP + NH4(+) + NADP(+) = GMP + NADPH + 2 H(+). Catalyzes the irreversible NADPH-dependent deamination of GMP to IMP. It functions in the conversion of nucleobase, nucleoside and nucleotide derivatives of G to A nucleotides, and in maintaining the intracellular balance of A and G nucleotides. This chain is GMP reductase, found in Streptococcus pyogenes serotype M3 (strain ATCC BAA-595 / MGAS315).